We begin with the raw amino-acid sequence, 144 residues long: Large ribosomal subunit protein uL16 (144 aa).

This sequence belongs to the universal ribosomal protein uL16 family. Part of the 50S ribosomal subunit.

In terms of biological role, binds 23S rRNA and is also seen to make contacts with the A and possibly P site tRNAs. In Thermoanaerobacter pseudethanolicus (strain ATCC 33223 / 39E) (Clostridium thermohydrosulfuricum), this protein is Large ribosomal subunit protein uL16.